Here is a 365-residue protein sequence, read N- to C-terminus: Green-sensitive opsin P521 (365 aa).

Topologically, residues 1–51 (MTEAWNVAVFAARRSRDDDDTTRGSVFTYTNTNNTRGPFEGPNYHIAPRWV) are extracellular. N-linked (GlcNAc...) asparagine glycosylation occurs at Asn-33. The chain crosses the membrane as a helical span at residues 52–76 (YNLVSFFMIIVVIASCFTNGLVLVA). At 77–88 (TAKFKKLRHPLN) the chain is on the cytoplasmic side. The helical transmembrane segment at 89–113 (WILVNLAFVDLVETLVASTISVFNQ) threads the bilayer. The Extracellular segment spans residues 114-128 (IFGYFILGHPLCVIE). The cysteines at positions 125 and 202 are disulfide-linked. Residues 129–148 (GYVVSSCGITGLWSLAIISW) form a helical membrane-spanning segment. Residues 149 to 167 (ERWFVVCKPFGNIKFDSKL) are Cytoplasmic-facing. Residues 168-191 (AIIGIVFSWVWAWGWSAPPIFGWS) form a helical membrane-spanning segment. Over 192 to 217 (RYWPHGLKTSCGPDVFSGSVELGCQS) the chain is Extracellular. Residues 218–245 (FMLTLMITCCFLPLFIIIVCYLQVWMAI) traverse the membrane as a helical segment. Residues 246–267 (RAVAAQQKESESTQKAEREVSR) lie on the Cytoplasmic side of the membrane. A helical membrane pass occupies residues 268 to 291 (MVVVMIVAFCICWGPYASFVSFAA). Residues 292-299 (ANPGYAFH) are Extracellular-facing. A helical transmembrane segment spans residues 300–324 (PLAAALPAYFAKSATIYNPVIYVFM). An N6-(retinylidene)lysine modification is found at Lys-311. At 325–365 (NRQFRNCIMQLFGKKVDDGSEASTTSRTEVSSVSNSSVAPA) the chain is on the cytoplasmic side. The tract at residues 342–365 (DGSEASTTSRTEVSSVSNSSVAPA) is disordered. Positions 345–365 (EASTTSRTEVSSVSNSSVAPA) are enriched in low complexity.

The protein belongs to the G-protein coupled receptor 1 family. Opsin subfamily. In terms of processing, phosphorylated on some or all of the serine and threonine residues present in the C-terminal region. In this lizard the color pigments are found in the rod-shaped photoreceptor cells which have been derived from ancestral cone-like photoreceptors.

Its subcellular location is the membrane. Functionally, visual pigments are the light-absorbing molecules that mediate vision. They consist of an apoprotein, opsin, covalently linked to cis-retinal. The protein is Green-sensitive opsin P521 of Gekko gecko (Tokay gecko).